The sequence spans 264 residues: Undecaprenyl-diphosphatase (264 aa).

8 helical membrane-spanning segments follow: residues 1-21 (MEIS…FLPI), 39-59 (QGLA…LFYF), 83-103 (SLLV…GLLF), 113-133 (SGVV…FADL), 143-163 (MTIK…IPGV), 184-204 (ANFS…LESI), 220-240 (LGVI…MGII), and 243-263 (IRML…LYLF).

This sequence belongs to the UppP family.

Its subcellular location is the cell inner membrane. It catalyses the reaction di-trans,octa-cis-undecaprenyl diphosphate + H2O = di-trans,octa-cis-undecaprenyl phosphate + phosphate + H(+). Catalyzes the dephosphorylation of undecaprenyl diphosphate (UPP). Confers resistance to bacitracin. The protein is Undecaprenyl-diphosphatase of Campylobacter concisus (strain 13826).